Reading from the N-terminus, the 469-residue chain is Aspartyl/glutamyl-tRNA(Asn/Gln) amidotransferase subunit B (469 aa).

This sequence belongs to the GatB/GatE family. GatB subfamily. As to quaternary structure, heterotrimer of A, B and C subunits.

It carries out the reaction L-glutamyl-tRNA(Gln) + L-glutamine + ATP + H2O = L-glutaminyl-tRNA(Gln) + L-glutamate + ADP + phosphate + H(+). The catalysed reaction is L-aspartyl-tRNA(Asn) + L-glutamine + ATP + H2O = L-asparaginyl-tRNA(Asn) + L-glutamate + ADP + phosphate + 2 H(+). Allows the formation of correctly charged Asn-tRNA(Asn) or Gln-tRNA(Gln) through the transamidation of misacylated Asp-tRNA(Asn) or Glu-tRNA(Gln) in organisms which lack either or both of asparaginyl-tRNA or glutaminyl-tRNA synthetases. The reaction takes place in the presence of glutamine and ATP through an activated phospho-Asp-tRNA(Asn) or phospho-Glu-tRNA(Gln). The protein is Aspartyl/glutamyl-tRNA(Asn/Gln) amidotransferase subunit B of Methanococcus maripaludis (strain C5 / ATCC BAA-1333).